A 281-amino-acid polypeptide reads, in one-letter code: Bifunctional protein FolD (281 aa).

NADP(+)-binding positions include 165–167 (GRS) and S190.

It belongs to the tetrahydrofolate dehydrogenase/cyclohydrolase family. Homodimer.

The catalysed reaction is (6R)-5,10-methylene-5,6,7,8-tetrahydrofolate + NADP(+) = (6R)-5,10-methenyltetrahydrofolate + NADPH. The enzyme catalyses (6R)-5,10-methenyltetrahydrofolate + H2O = (6R)-10-formyltetrahydrofolate + H(+). It functions in the pathway one-carbon metabolism; tetrahydrofolate interconversion. Its function is as follows. Catalyzes the oxidation of 5,10-methylenetetrahydrofolate to 5,10-methenyltetrahydrofolate and then the hydrolysis of 5,10-methenyltetrahydrofolate to 10-formyltetrahydrofolate. This is Bifunctional protein FolD from Polaromonas sp. (strain JS666 / ATCC BAA-500).